The following is a 91-amino-acid chain: Tityustoxin-19 (91 aa).

The first 25 residues, Met-1 to Ala-25, serve as a signal peptide directing secretion. The BetaSPN-type CS-alpha/beta domain occupies Glu-58–Leu-91. Disulfide bonds link Cys-61-Cys-81, Cys-68-Cys-86, and Cys-72-Cys-88.

Belongs to the long chain scorpion toxin family. Class 2 subfamily. As to expression, expressed by the venom gland.

The protein resides in the secreted. Its function is as follows. May function as a voltage-gated potassium channel blocker and may have cytolytic activity. Is often not detected in the tested venom fractions, suggesting that the toxin is likely subject to frequent processing within the venom. In terms of biological role, specific and reversible blocker of the potassium channel Kv1.2/KCNA2 (IC(50)=544 nM). Shows cytolytic effects on erythrocytes and induces non-selective pore formation when high concentrations (300 nM) are applied on oocytes. Functionally, does not cause hemolysis, mast cell degranulation, LDH release, and does not have antimicrobial activity. Does not cause edema and pain. This chain is Tityustoxin-19, found in Tityus serrulatus (Brazilian scorpion).